We begin with the raw amino-acid sequence, 756 residues long: 5-methyltetrahydropteroyltriglutamate--homocysteine methyltransferase (756 aa).

Residues 16-19 (RELK) and Lys-112 each bind 5-methyltetrahydropteroyltri-L-glutamate. L-homocysteine-binding positions include 432 to 434 (IGS) and Glu-485. L-methionine-binding positions include 432-434 (IGS) and Glu-485. Residues 516–517 (RC) and Trp-562 contribute to the 5-methyltetrahydropteroyltri-L-glutamate site. L-homocysteine is bound at residue Asp-600. An L-methionine-binding site is contributed by Asp-600. Glu-606 contributes to the 5-methyltetrahydropteroyltri-L-glutamate binding site. 3 residues coordinate Zn(2+): His-642, Cys-644, and Glu-666. His-695 (proton donor) is an active-site residue. Cys-727 contributes to the Zn(2+) binding site.

The protein belongs to the vitamin-B12 independent methionine synthase family. It depends on Zn(2+) as a cofactor.

The catalysed reaction is 5-methyltetrahydropteroyltri-L-glutamate + L-homocysteine = tetrahydropteroyltri-L-glutamate + L-methionine. It functions in the pathway amino-acid biosynthesis; L-methionine biosynthesis via de novo pathway; L-methionine from L-homocysteine (MetE route): step 1/1. Its function is as follows. Catalyzes the transfer of a methyl group from 5-methyltetrahydrofolate to homocysteine resulting in methionine formation. The sequence is that of 5-methyltetrahydropteroyltriglutamate--homocysteine methyltransferase from Haemophilus influenzae (strain PittGG).